We begin with the raw amino-acid sequence, 479 residues long: Anaerobic nitric oxide reductase flavorubredoxin (479 aa).

Residues 30 to 210 (LRGSSYNSYL…PFSRLVTPKI (181 aa)) are zinc metallo-hydrolase. Fe cation is bound by residues histidine 79, glutamate 81, aspartate 83, histidine 147, aspartate 166, and histidine 227. The Flavodoxin-like domain maps to 254–393 (ITIFYDTMSN…LCRQHGRDIA (140 aa)). FMN contacts are provided by residues 260–264 (TMSNN) and 342–369 (AFGS…EMSL). Positions 423 to 474 (GPKMQCSVCQWIYDPALGEPLQDVAPGTPWSDVPDNFLCPECSLGKDVFDVL) constitute a Rubredoxin-like domain. Fe cation contacts are provided by cysteine 428, cysteine 431, cysteine 461, and cysteine 464.

In the N-terminal section; belongs to the zinc metallo-hydrolase group 3 family. Homotetramer. Fe cation is required as a cofactor. It depends on FMN as a cofactor.

The protein resides in the cytoplasm. It functions in the pathway nitrogen metabolism; nitric oxide reduction. Anaerobic nitric oxide reductase; uses NADH to detoxify nitric oxide (NO), protecting several 4Fe-4S NO-sensitive enzymes. Has at least 2 reductase partners, only one of which (NorW, flavorubredoxin reductase) has been identified. NO probably binds to the di-iron center; electrons enter from the NorW at rubredoxin and are transferred sequentially to the FMN center and the di-iron center. Also able to function as an aerobic oxygen reductase. The sequence is that of Anaerobic nitric oxide reductase flavorubredoxin from Salmonella arizonae (strain ATCC BAA-731 / CDC346-86 / RSK2980).